The primary structure comprises 469 residues: Bile acid receptor (469 aa).

Residue Lys119 forms a Glycyl lysine isopeptide (Lys-Gly) (interchain with G-Cter in SUMO1) linkage. The segment at residues 121–196 (DELCVVCGDR…MGMLAECLLT (76 aa)) is a DNA-binding region (nuclear receptor). The NR C4-type zinc finger occupies 124 to 144 (CVVCGDRASGYHYNALTCEGC). Residues Ser132 and Ser151 each carry the phosphoserine; by PKC/PRKCA modification. Lys154 is subject to N6-acetyllysine; by EP300. The NR C4-type zinc-finger motif lies at 160–184 (CKNGGNCVMDMYMRRKCQDCRLRKC). Position 203 is an N6-methyllysine; by SETD7 (Lys203). Lys210 carries the N6-acetyllysine; by EP300 modification. An NR LBD domain is found at 245–469 (DQQTLLDYIM…PLLCEIWDVQ (225 aa)). A Glycyl lysine isopeptide (Lys-Gly) (interchain with G-Cter in SUMO1) cross-link involves residue Lys272. Position 328 (Arg328) interacts with 3beta,7beta-dihydroxy-5beta-cholan-24-oate. Chenodeoxycholate-binding residues include Arg328, Tyr358, and Tyr366. Tyr366 contacts 3beta,7beta-dihydroxy-5beta-cholan-24-oate. Thr439 is subject to Phosphothreonine; by PKC/PRKCZ. His444 is a chenodeoxycholate binding site.

The protein belongs to the nuclear hormone receptor family. NR1 subfamily. In terms of assembly, heterodimer with RXRA; the heterodimerization enhances the binding affinity for LXXLL motifs from coactivators. Binds DNA predominantly as a heterodimer with RXRA. After activation by agonist binding interacts with coactivators. Interacts with NCOA1, NCOA2, PPARGC1A, CARM1, SETD7, PRMT1, GPS2, SMARCA4 and MED1, EP300 and SMARCD1. Interacts with XRCC5 and XRCC6; decreasing NR1H4/FXR transactivation activity towards ABCB11/BSEP. Interacts with PAGR1 AND NCOA6; indicative for an association with an MLL2/MLL3 complex (ASCOM). Acetylated by EP300. Lys-210 as is the major acetylation site for EP300; the dynamicly regulated acetylation inhibits heterodimerization with RXRA and transactivation activity. Deacetylated by SIRT1. Post-translationally, methylation may increase transactivation of target genes. In terms of processing, phosphorylation by PKC/PRKCA increases transactivation activity by promoting association with PPARGC1A. Sumoylated upon ligand binding.

It is found in the nucleus. Its function is as follows. Ligand-activated transcription factor. Receptor for bile acids (BAs) such as chenodeoxycholic acid (CDCA), lithocholic acid, deoxycholic acid (DCA) and allocholic acid (ACA). Plays a essential role in BA homeostasis through the regulation of genes involved in BA synthesis, conjugation and enterohepatic circulation. Also regulates lipid and glucose homeostasis and is involved innate immune response. The FXR-RXR heterodimer binds predominantly to farnesoid X receptor response elements (FXREs) containing two inverted repeats of the consensus sequence 5'-AGGTCA-3' in which the monomers are spaced by 1 nucleotide (IR-1) but also to tandem repeat DR1 sites with lower affinity, and can be activated by either FXR or RXR-specific ligands. It is proposed that monomeric nuclear receptors such as NR5A2/LRH-1 bound to coregulatory nuclear responsive element (NRE) halfsites located in close proximity to FXREs modulate transcriptional activity. In the liver activates transcription of the corepressor NR0B2 thereby indirectly inhibiting CYP7A1 and CYP8B1 (involved in BA synthesis) implicating at least in part histone demethylase KDM1A resulting in epigenomic repression, and SLC10A1/NTCP (involved in hepatic uptake of conjugated BAs). Activates transcription of the repressor MAFG (involved in regulation of BA synthesis). Activates transcription of SLC27A5/BACS and BAAT (involved in BA conjugation), ABCB11/BSEP (involved in bile salt export) by directly recruiting histone methyltransferase CARM1, and ABCC2/MRP2 (involved in secretion of conjugated BAs) and ABCB4 (involved in secretion of phosphatidylcholine in the small intestine). Activates transcription of SLC27A5/BACS and BAAT (involved in BA conjugation), ABCB11/BSEP (involved in bile salt export) by directly recruiting histone methyltransferase CARM1, and ABCC2/MRP2 (involved in secretion of conjugated BAs) and ABCB4 (involved in secretion of phosphatidylcholine in the small intestine). In the intestine activates FGF19 expression and secretion leading to hepatic CYP7A1 repression. The function also involves the coordinated induction of hepatic KLB/beta-klotho expression. Regulates transcription of liver UGT2B4 and SULT2A1 involved in BA detoxification; binding to the UGT2B4 promoter seems to imply a monomeric transactivation independent of RXRA. Modulates lipid homeostasis by activating liver NR0B2/SHP-mediated repression of SREBF1 (involved in de novo lipogenesis), expression of PLTP (involved in HDL formation), SCARB1 (involved in HDL hepatic uptake), APOE, APOC1, APOC4, PPARA (involved in beta-oxidation of fatty acids), VLDLR and SDC1 (involved in the hepatic uptake of LDL and IDL remnants), and inhibiting expression of MTTP (involved in VLDL assembly). Increases expression of APOC2 (promoting lipoprotein lipase activity implicated in triglyceride clearance). Transrepresses APOA1 involving a monomeric competition with NR2A1 for binding to a DR1 element. Also reduces triglyceride clearance by inhibiting expression of ANGPTL3 and APOC3 (both involved in inhibition of lipoprotein lipase). Involved in glucose homeostasis by modulating hepatic gluconeogenesis through activation of NR0B2/SHP-mediated repression of respective genes. Modulates glycogen synthesis (inducing phosphorylation of glycogen synthase kinase-3). Modulates glucose-stimulated insulin secretion and is involved in insulin resistance. Involved in intestinal innate immunity. Plays a role in protecting the distal small intestine against bacterial overgrowth and preservation of the epithelial barrier. Down-regulates inflammatory cytokine expression in several types of immune cells including macrophages and mononuclear cells. Mediates trans-repression of TLR4-induced cytokine expression; the function seems to require its sumoylation and prevents N-CoR nuclear receptor corepressor clearance from target genes such as IL1B and NOS2. Involved in the TLR9-mediated protective mechanism in intestinal inflammation. Plays an anti-inflammatory role in liver inflammation; proposed to inhibit pro-inflammatory (but not antiapoptotic) NF-kappa-B signaling. This Rattus norvegicus (Rat) protein is Bile acid receptor (Nr1h4).